An 836-amino-acid chain; its full sequence is Conserved oligomeric Golgi complex subunit 7 (836 aa).

Coiled coils occupy residues 29–49 and 107–127; these read QDSLEKHLVDLEMKLQIASEE and LARVDNVKQRMEAAYKTLQDA. A disordered region spans residues 246-265; it reads KLANERSESQRLSSGDEFQS.

The protein belongs to the COG7 family. In terms of assembly, component of the conserved oligomeric Golgi complex which is composed of eight different subunits and is required for normal Golgi morphology and localization. Interacts with COG5 and COG6.

It localises to the golgi apparatus membrane. Its function is as follows. Required for normal Golgi function. Necessary for embryo development and pigmentation, especially for the expansion of cells and organs, and for the formation of the organized shoot apical meristem (SAM). Probably involved in the generation of the extra-cellular matrix. The protein is Conserved oligomeric Golgi complex subunit 7 of Arabidopsis thaliana (Mouse-ear cress).